The sequence spans 27 residues: iraD leader peptide (27 aa).

In terms of biological role, a short protein whose stop codon overlaps with the start codon of downstream iraD; its mRNA secondary structure is predicted to fold and sequester the Shine-Dalgarno sequence of iraD. When this protein is expressed the downstream iraD is also expressed due to ribosomal coupling. This is iraD leader peptide (idlP) from Escherichia coli (strain K12).